The chain runs to 382 residues: D-galactonate dehydratase (382 aa).

Residue Asp183 participates in Mg(2+) binding. His185 (proton donor) is an active-site residue. Positions 209 and 235 each coordinate Mg(2+). Catalysis depends on His285, which acts as the Proton acceptor.

It belongs to the mandelate racemase/muconate lactonizing enzyme family. GalD subfamily. Mg(2+) is required as a cofactor.

The enzyme catalyses D-galactonate = 2-dehydro-3-deoxy-D-galactonate + H2O. It functions in the pathway carbohydrate acid metabolism; D-galactonate degradation; D-glyceraldehyde 3-phosphate and pyruvate from D-galactonate: step 1/3. Functionally, catalyzes the dehydration of D-galactonate to 2-keto-3-deoxy-D-galactonate. This chain is D-galactonate dehydratase, found in Variovorax paradoxus (strain S110).